A 364-amino-acid chain; its full sequence is Lipoyl synthase, mitochondrial (364 aa).

Positions proline 34–tyrosine 53 are disordered. [4Fe-4S] cluster contacts are provided by cysteine 99, cysteine 104, cysteine 110, cysteine 130, cysteine 134, cysteine 137, and serine 345. A Radical SAM core domain is found at glutamate 115–leucine 334.

The protein belongs to the radical SAM superfamily. Lipoyl synthase family. Requires [4Fe-4S] cluster as cofactor.

The protein localises to the mitochondrion. It carries out the reaction [[Fe-S] cluster scaffold protein carrying a second [4Fe-4S](2+) cluster] + N(6)-octanoyl-L-lysyl-[protein] + 2 oxidized [2Fe-2S]-[ferredoxin] + 2 S-adenosyl-L-methionine + 4 H(+) = [[Fe-S] cluster scaffold protein] + N(6)-[(R)-dihydrolipoyl]-L-lysyl-[protein] + 4 Fe(3+) + 2 hydrogen sulfide + 2 5'-deoxyadenosine + 2 L-methionine + 2 reduced [2Fe-2S]-[ferredoxin]. The protein operates within protein modification; protein lipoylation via endogenous pathway; protein N(6)-(lipoyl)lysine from octanoyl-[acyl-carrier-protein]: step 2/2. Catalyzes the radical-mediated insertion of two sulfur atoms into the C-6 and C-8 positions of the octanoyl moiety bound to the lipoyl domains of lipoate-dependent enzymes, thereby converting the octanoylated domains into lipoylated derivatives. This is Lipoyl synthase, mitochondrial from Drosophila grimshawi (Hawaiian fruit fly).